The primary structure comprises 124 residues: Small ribosomal subunit protein uS12 (124 aa).

A disordered region spans residues Met-1–Gly-32. Asp-89 carries the post-translational modification 3-methylthioaspartic acid. Residues Gln-105 to Lys-124 form a disordered region. The span at Gln-111–Lys-124 shows a compositional bias: basic residues.

It belongs to the universal ribosomal protein uS12 family. In terms of assembly, part of the 30S ribosomal subunit. Contacts proteins S8 and S17. May interact with IF1 in the 30S initiation complex.

Functionally, with S4 and S5 plays an important role in translational accuracy. Interacts with and stabilizes bases of the 16S rRNA that are involved in tRNA selection in the A site and with the mRNA backbone. Located at the interface of the 30S and 50S subunits, it traverses the body of the 30S subunit contacting proteins on the other side and probably holding the rRNA structure together. The combined cluster of proteins S8, S12 and S17 appears to hold together the shoulder and platform of the 30S subunit. This chain is Small ribosomal subunit protein uS12, found in Beutenbergia cavernae (strain ATCC BAA-8 / DSM 12333 / CCUG 43141 / JCM 11478 / NBRC 16432 / NCIMB 13614 / HKI 0122).